An 834-amino-acid polypeptide reads, in one-letter code: Phenylalanine--tRNA ligase beta subunit (834 aa).

The 112-residue stretch at 48 to 159 (GDIERPLVVG…GTAEPGTDAN (112 aa)) folds into the tRNA-binding domain. A B5 domain is found at 411-492 (PAPEPIRMDI…RLEGLEQIPS (82 aa)). Positions 470, 476, 479, and 480 each coordinate Mg(2+). Residues 740 to 833 (SPFPAVLQDV…AADAVGAVLR (94 aa)) enclose the FDX-ACB domain.

It belongs to the phenylalanyl-tRNA synthetase beta subunit family. Type 1 subfamily. Tetramer of two alpha and two beta subunits. Mg(2+) is required as a cofactor.

The protein localises to the cytoplasm. It catalyses the reaction tRNA(Phe) + L-phenylalanine + ATP = L-phenylalanyl-tRNA(Phe) + AMP + diphosphate + H(+). This is Phenylalanine--tRNA ligase beta subunit from Nocardia farcinica (strain IFM 10152).